A 447-amino-acid polypeptide reads, in one-letter code: N-succinylarginine dihydrolase (447 aa).

Residues 19–28, N110, and 137–138 contribute to the substrate site; these read AGLSFGNEAS and HR. The active site involves E174. R212 lines the substrate pocket. H248 is a catalytic residue. Residues D250 and N359 each contribute to the substrate site. C365 acts as the Nucleophile in catalysis.

This sequence belongs to the succinylarginine dihydrolase family. As to quaternary structure, homodimer.

It catalyses the reaction N(2)-succinyl-L-arginine + 2 H2O + 2 H(+) = N(2)-succinyl-L-ornithine + 2 NH4(+) + CO2. The protein operates within amino-acid degradation; L-arginine degradation via AST pathway; L-glutamate and succinate from L-arginine: step 2/5. Its function is as follows. Catalyzes the hydrolysis of N(2)-succinylarginine into N(2)-succinylornithine, ammonia and CO(2). In Salmonella typhi, this protein is N-succinylarginine dihydrolase.